The following is a 423-amino-acid chain: UBX domain-containing protein 1 (423 aa).

Residues 44-167 (QTDDQKDRRE…EVTDPSDPNS (124 aa)) are disordered. Residues 46–66 (DDQKDRREEAHWNRQQEKALK) show a composition bias toward basic and acidic residues. Over residues 69-79 (AFSTNSSNKAI) the composition is skewed to polar residues. Residues 115-130 (SSRSGSGNNSRFMSFS) are compositionally biased toward low complexity. A phosphoserine mark is found at Ser128, Ser210, and Ser224. The SEP domain occupies 232–297 (KVTREITFWK…VYKKLDESYK (66 aa)). Lys241 participates in a covalent cross-link: Glycyl lysine isopeptide (Lys-Gly) (interchain with G-Cter in ubiquitin). A disordered region spans residues 299 to 348 (PTRKLGGFSGQGQRLGSPIPGESSPAEVPKNETPAAQEQPMPDNEPKQGD). Ser315, Ser321, and Ser322 each carry phosphoserine. Thr331 is subject to Phosphothreonine. The region spanning 344-421 (PKQGDTSIQI…DLLNSVVVQR (78 aa)) is the UBX domain.

In terms of assembly, forms a complex composed of CDC48, NPL4, UFD1, DOA1, SHP1 and deubiquitinase OTU1. Interacts with CDC48.

The protein resides in the nucleus. It localises to the cytoplasm. Involved in CDC48-dependent protein degradation through the ubiquitin/proteasome pathway. Direct or indirect positive regulator of GLC7 activity. The chain is UBX domain-containing protein 1 (SHP1) from Saccharomyces cerevisiae (strain ATCC 204508 / S288c) (Baker's yeast).